An 883-amino-acid chain; its full sequence is Receptor-like protein 40 (883 aa).

A signal peptide spans 1 to 21 (MSELLFSLNFLLLLLLSCVSP). Topologically, residues 22-846 (SSFFTFNNPV…EDEQVLNWKA (825 aa)) are extracellular. N58, N91, and N109 each carry an N-linked (GlcNAc...) asparagine glycan. LRR repeat units follow at residues 97 to 121 (FHHL…KFGM) and 122 to 143 (LNNL…PFSF). N145 carries N-linked (GlcNAc...) asparagine glycosylation. LRR repeat units follow at residues 146–169 (LSML…ARNL), 170–195 (RKLR…LFEL), 197–219 (HIIY…EFGN), 220–244 (LNKL…ISNL), 246–267 (QLTE…VQNL), 268–291 (TKLS…LFTM), 293–316 (FLSY…SSSS), 317–340 (SRLE…ISKL), 342–364 (NLKE…LFSS), 365–390 (LKSL…SYIP), 391–412 (STLE…VFKT), 413–437 (LHNL…LWSL), 439–462 (RLSS…VLVN), and 463–486 (SSVQ…PLSI). 4 N-linked (GlcNAc...) asparagine glycosylation sites follow: N189, N207, N243, and N266. N-linked (GlcNAc...) asparagine glycans are attached at residues N305 and N312. N352 is a glycosylation site (N-linked (GlcNAc...) asparagine). N462 is a glycosylation site (N-linked (GlcNAc...) asparagine). The stretch at 487–506 (NYFSAIDNRFGGDIPLSICN) is one LRR 17; degenerate repeat. N-linked (GlcNAc...) asparagine glycosylation is found at N506 and N519. 10 LRR repeats span residues 507 to 528 (RSSL…PPCL), 529 to 552 (SNLL…YYED), 554 to 576 (PLRS…LINC), 578 to 600 (ALQF…LKAL), 601 to 624 (PKLQ…NEGP), 627 to 651 (FPEL…FFVN), 701 to 724 (TSSA…IGLL), 725 to 747 (KALI…SFAN), 748 to 772 (LKKM…LRTL), and 774 to 797 (FLAY…QITG). N575 carries N-linked (GlcNAc...) asparagine glycosylation. Residue N731 is glycosylated (N-linked (GlcNAc...) asparagine). N779 carries an N-linked (GlcNAc...) asparagine glycan. A helical transmembrane segment spans residues 847-867 (VAIGYGIGVLLGLAIAQLISL). At 868–883 (YKPKWLASLVIKSRNC) the chain is on the cytoplasmic side.

This sequence belongs to the RLP family.

Its subcellular location is the cell membrane. This is Receptor-like protein 40 from Arabidopsis thaliana (Mouse-ear cress).